The following is a 321-amino-acid chain: Glycerol-3-phosphate dehydrogenase [NAD(P)+] (321 aa).

5 residues coordinate NADPH: Ser-10, Phe-11, Arg-31, Arg-32, and Lys-104. Sn-glycerol 3-phosphate contacts are provided by Lys-104 and Gly-132. Ala-136 contributes to the NADPH binding site. Positions 186, 238, 248, 249, and 250 each coordinate sn-glycerol 3-phosphate. Lys-186 serves as the catalytic Proton acceptor. Arg-249 is an NADPH binding site. Residue Glu-272 participates in NADPH binding.

Belongs to the NAD-dependent glycerol-3-phosphate dehydrogenase family.

Its subcellular location is the cytoplasm. The enzyme catalyses sn-glycerol 3-phosphate + NAD(+) = dihydroxyacetone phosphate + NADH + H(+). It catalyses the reaction sn-glycerol 3-phosphate + NADP(+) = dihydroxyacetone phosphate + NADPH + H(+). Its function is as follows. Catalyzes the reduction of the glycolytic intermediate dihydroxyacetone phosphate (DHAP) to sn-glycerol 3-phosphate (G3P). The protein is Glycerol-3-phosphate dehydrogenase [NAD(P)+] of Methanothermobacter thermautotrophicus (strain ATCC 29096 / DSM 1053 / JCM 10044 / NBRC 100330 / Delta H) (Methanobacterium thermoautotrophicum).